Consider the following 165-residue polypeptide: Phosphopantetheine adenylyltransferase (165 aa).

A substrate-binding site is contributed by S10. ATP contacts are provided by residues 10 to 11 (SF) and H18. The substrate site is built by K42, L74, and R88. Residues 89-91 (GLR), E99, and 124-130 (WFYTSST) contribute to the ATP site.

It belongs to the bacterial CoaD family. As to quaternary structure, homohexamer. The cofactor is Mg(2+).

It localises to the cytoplasm. The catalysed reaction is (R)-4'-phosphopantetheine + ATP + H(+) = 3'-dephospho-CoA + diphosphate. Its pathway is cofactor biosynthesis; coenzyme A biosynthesis; CoA from (R)-pantothenate: step 4/5. Functionally, reversibly transfers an adenylyl group from ATP to 4'-phosphopantetheine, yielding dephospho-CoA (dPCoA) and pyrophosphate. This Syntrophus aciditrophicus (strain SB) protein is Phosphopantetheine adenylyltransferase.